The sequence spans 149 residues: Dehydrin Rab15 (149 aa).

The segment at 1 to 149 (MEFQGQHDNP…KIKEKLPGQH (149 aa)) is disordered. A compositionally biased stretch (basic and acidic residues) spans 78–93 (KEKIKEKLPGGHKDNQ). The segment covering 100 to 117 (TGTGGAYGPGTGTGGAYG) has biased composition (gly residues). Residues 132–149 (GEKKGIMDKIKEKLPGQH) show a composition bias toward basic and acidic residues.

This sequence belongs to the plant dehydrin family.

This is Dehydrin Rab15 (RAB15) from Triticum aestivum (Wheat).